The primary structure comprises 145 residues: Neutral phospholipase A2 homolog taipoxin beta chain 1 (145 aa).

The first 27 residues, M1–L27, serve as a signal peptide directing secretion. 7 disulfides stabilise this stretch: C38-C98, C54-C144, C56-C72, C71-C125, C78-C118, C87-C111, and C105-C116.

Belongs to the phospholipase A2 family. Group I subfamily. D49 sub-subfamily. Heterotrimer of alpha, beta, and gamma chains; non-covalently linked. As to expression, expressed by the venom gland.

It localises to the secreted. In terms of biological role, heterotrimer: Snake venom phospholipase A2 (PLA2) heterotrimer that acts as a potent presynaptic neurotoxin by blocking synaptic transmission and synaptic vesicle recycling. May act by binding in a calcium-dependent fashion to neurotonal pentraxin-1 (NPTX1) and neurotonal pentraxin-2 (NPTX2), but not to neuronal pentraxin receptor (NPTXR). Also binds to taipoxin-associated calcium binding protein 49 (RCN2), a protein localized in the lumen of endoplasmic reticulum. Functionally, monomer (beta chain): Snake venom phospholipase A2 homolog that is neither toxic nor enzymatically active. Does not bind calcium. This chain is Neutral phospholipase A2 homolog taipoxin beta chain 1, found in Oxyuranus scutellatus scutellatus (Australian taipan).